Here is a 379-residue protein sequence, read N- to C-terminus: MSATLRRLILLTSTNRSRNLSPPFLSTAVNHLSLSFSSVSSSPESHTSPSRIRTRTPLETQFETWIQNLKPGFTNSDVVIALRAQSDPDLALDIFRWTAQQRGYKHNHEAYHTMIKQAITGKRNNFVETLIEEVIAGACEMSVPLYNCIIRFCCGRKFLFNRAFDVYNKMLRSDDSKPDLETYTLLLSSLLKRFNKLNVCYVYLHAVRSLTKQMKSNGVIPDTFVLNMIIKAYAKCLEVDEAIRVFKEMALYGSEPNAYTYSYLVKGVCEKGRVGQGLGFYKEMQVKGMVPNGSCYMVLICSLSMERRLDEAVEVVYDMLANSLSPDMLTYNTVLTELCRGGRGSEALEMVEEWKKRDPVMGERNYRTLMDEVYFLNKG.

PPR repeat units follow at residues 142–177 (SVPL…DDSK), 179–221 (DLET…GVIP), 222–256 (DTFV…GSEP), 257–291 (NAYT…GMVP), 292–326 (NGSC…SLSP), and 327–361 (DMLT…DPVM).

It belongs to the PPR family. P subfamily.

The protein localises to the mitochondrion. The polypeptide is Pentatricopeptide repeat-containing protein At3g25210, mitochondrial (Arabidopsis thaliana (Mouse-ear cress)).